The chain runs to 956 residues: Glycine dehydrogenase (decarboxylating) 2 (956 aa).

Residue lysine 706 is modified to N6-(pyridoxal phosphate)lysine.

The protein belongs to the GcvP family. As to quaternary structure, the glycine cleavage system is composed of four proteins: P, T, L and H. Pyridoxal 5'-phosphate serves as cofactor.

The enzyme catalyses N(6)-[(R)-lipoyl]-L-lysyl-[glycine-cleavage complex H protein] + glycine + H(+) = N(6)-[(R)-S(8)-aminomethyldihydrolipoyl]-L-lysyl-[glycine-cleavage complex H protein] + CO2. Functionally, the glycine cleavage system catalyzes the degradation of glycine. The P protein binds the alpha-amino group of glycine through its pyridoxal phosphate cofactor; CO(2) is released and the remaining methylamine moiety is then transferred to the lipoamide cofactor of the H protein. This is Glycine dehydrogenase (decarboxylating) 2 from Colwellia psychrerythraea (strain 34H / ATCC BAA-681) (Vibrio psychroerythus).